The following is a 432-amino-acid chain: Adenylosuccinate synthetase (432 aa).

GTP-binding positions include 16-22 (GDEGKGK) and 44-46 (GHM). Residue Asp17 is the Proton acceptor of the active site. Asp17 and Gly44 together coordinate Mg(2+). Residues 17-20 (DEGK), 42-45 (NAGH), Thr132, Arg146, Gln226, Thr241, and Arg305 contribute to the IMP site. The active-site Proton donor is the His45. 301–307 (LNTGRPR) contributes to the substrate binding site. GTP is bound by residues Arg307, 333–335 (LFD), and 415–417 (SVG).

The protein belongs to the adenylosuccinate synthetase family. In terms of assembly, homodimer. Requires Mg(2+) as cofactor.

Its subcellular location is the cytoplasm. The enzyme catalyses IMP + L-aspartate + GTP = N(6)-(1,2-dicarboxyethyl)-AMP + GDP + phosphate + 2 H(+). The protein operates within purine metabolism; AMP biosynthesis via de novo pathway; AMP from IMP: step 1/2. Functionally, plays an important role in the de novo pathway of purine nucleotide biosynthesis. Catalyzes the first committed step in the biosynthesis of AMP from IMP. The sequence is that of Adenylosuccinate synthetase from Mycoplasma mycoides subsp. mycoides SC (strain CCUG 32753 / NCTC 10114 / PG1).